The chain runs to 564 residues: Dihydroxy-acid dehydratase (564 aa).

Cysteine 53 lines the [2Fe-2S] cluster pocket. Aspartate 85 is a Mg(2+) binding site. A [2Fe-2S] cluster-binding site is contributed by cysteine 126. Residues aspartate 127 and lysine 128 each coordinate Mg(2+). At lysine 128 the chain carries N6-carboxylysine. Cysteine 203 is a binding site for [2Fe-2S] cluster. Mg(2+) is bound at residue glutamate 454. The Proton acceptor role is filled by serine 480.

It belongs to the IlvD/Edd family. Homodimer. Requires [2Fe-2S] cluster as cofactor. Mg(2+) is required as a cofactor.

The catalysed reaction is (2R)-2,3-dihydroxy-3-methylbutanoate = 3-methyl-2-oxobutanoate + H2O. The enzyme catalyses (2R,3R)-2,3-dihydroxy-3-methylpentanoate = (S)-3-methyl-2-oxopentanoate + H2O. It participates in amino-acid biosynthesis; L-isoleucine biosynthesis; L-isoleucine from 2-oxobutanoate: step 3/4. The protein operates within amino-acid biosynthesis; L-valine biosynthesis; L-valine from pyruvate: step 3/4. Functionally, functions in the biosynthesis of branched-chain amino acids. Catalyzes the dehydration of (2R,3R)-2,3-dihydroxy-3-methylpentanoate (2,3-dihydroxy-3-methylvalerate) into 2-oxo-3-methylpentanoate (2-oxo-3-methylvalerate) and of (2R)-2,3-dihydroxy-3-methylbutanoate (2,3-dihydroxyisovalerate) into 2-oxo-3-methylbutanoate (2-oxoisovalerate), the penultimate precursor to L-isoleucine and L-valine, respectively. The protein is Dihydroxy-acid dehydratase of Mycobacterium ulcerans (strain Agy99).